We begin with the raw amino-acid sequence, 269 residues long: Tetrahydromethanopterin S-methyltransferase subunit C (269 aa).

Transmembrane regions (helical) follow at residues 18–38 (VLVI…FVPS), 39–59 (LAML…ANTT), 62–82 (VAAY…LGMG), 84–104 (ISAL…ALPF), 106–126 (LVLA…FIVG), 152–172 (ALAI…DLII), 180–200 (IIAL…NACI), and 222–242 (LVFS…VFWI).

It belongs to the MtrC family. In terms of assembly, the complex is composed of 8 subunits; MtrA, MtrB, MtrC, MtrD, MtrE, MtrF, MtrG and MtrH.

The protein resides in the cell membrane. It carries out the reaction 5-methyl-5,6,7,8-tetrahydromethanopterin + coenzyme M + 2 Na(+)(in) = 5,6,7,8-tetrahydromethanopterin + methyl-coenzyme M + 2 Na(+)(out). It functions in the pathway one-carbon metabolism; methanogenesis from CO(2); methyl-coenzyme M from 5,10-methylene-5,6,7,8-tetrahydromethanopterin: step 2/2. In terms of biological role, part of a complex that catalyzes the formation of methyl-coenzyme M and tetrahydromethanopterin from coenzyme M and methyl-tetrahydromethanopterin. This is an energy-conserving, sodium-ion translocating step. This chain is Tetrahydromethanopterin S-methyltransferase subunit C, found in Methanococcus vannielii (strain ATCC 35089 / DSM 1224 / JCM 13029 / OCM 148 / SB).